Reading from the N-terminus, the 367-residue chain is BTB/POZ domain-containing protein Tiwaz (367 aa).

Disordered stretches follow at residues 16 to 46 and 62 to 87; these read LTVD…PRDL and SSPT…SSVT. The span at 28-45 shows a compositional bias: basic and acidic residues; the sequence is CDMDRERERDVKALEPRD. Residues 135-205 form the BTB domain; that stretch reads APVHIDVGGT…MRNSRLLIAE (71 aa). A disordered region spans residues 240–261; sequence GNYLVAPPTPPARHIKTSPRTS.

Functions with the transcription factor TfAP-2 to regulate octopamine neuronal signaling pathways that control behaviors such as male aggression, male mating, and the initiation of feeding. Required for TfAP-2 transcriptional activity in octopaminergic neurons. Functions with TfAP-2 to regulate expression of genes which are involved in promoting octopamine production and secretion from octopaminergic neurons, such as Tbh and Vmat. Octopamine then modulates feeding and male aggression by regulating the expression of the satiation hormone Dsk in insulin-producing cells (IPCs). Functions with octopamine and Dsk as part of a negative feedback loop to prevent overeating; acts with TfAP-2 to regulate octopamine signaling pathways that initiate feeding, then octopamine activates expression of Dsk which inhibits consummatory behavior. May also be involved in negatively regulating nociception in larvae to prevent spontaneous pain and hyperalgesia. The chain is BTB/POZ domain-containing protein Tiwaz from Drosophila melanogaster (Fruit fly).